A 193-amino-acid polypeptide reads, in one-letter code: Thymidine kinase (193 aa).

ATP is bound by residues 9–16 and 87–90; these read STMNAGKS and DEAQ. Residue glutamate 88 is the Proton acceptor of the active site. Zn(2+)-binding residues include cysteine 145, cysteine 147, cysteine 182, and histidine 185.

This sequence belongs to the thymidine kinase family. As to quaternary structure, homotetramer.

It localises to the cytoplasm. It carries out the reaction thymidine + ATP = dTMP + ADP + H(+). In Haemophilus influenzae (strain 86-028NP), this protein is Thymidine kinase.